Reading from the N-terminus, the 887-residue chain is Bifunctional uridylyltransferase/uridylyl-removing enzyme (887 aa).

The interval 1–329 is uridylyltransferase; it reads MKGLNAKPFS…FPDEEAVTTI (329 aa). Residues 330 to 686 are uridylyl-removing; sequence INERFQKRGD…TRAAETGAGV (357 aa). The region spanning 448–570 is the HD domain; that stretch reads VDEHILMVVR…MRDERHLIAL (123 aa). ACT domains follow at residues 687-772 and 796-871; these read EVLV…GRLS and VLSI…PETP. Residues 864-887 form a disordered region; sequence TSPQPETPGKAPGKPSAGDRIIPR.

This sequence belongs to the GlnD family. Requires Mg(2+) as cofactor.

The enzyme catalyses [protein-PII]-L-tyrosine + UTP = [protein-PII]-uridylyl-L-tyrosine + diphosphate. The catalysed reaction is [protein-PII]-uridylyl-L-tyrosine + H2O = [protein-PII]-L-tyrosine + UMP + H(+). With respect to regulation, uridylyltransferase (UTase) activity is inhibited by glutamine, while glutamine activates uridylyl-removing (UR) activity. Modifies, by uridylylation and deuridylylation, the PII regulatory proteins (GlnB and homologs), in response to the nitrogen status of the cell that GlnD senses through the glutamine level. Under low glutamine levels, catalyzes the conversion of the PII proteins and UTP to PII-UMP and PPi, while under higher glutamine levels, GlnD hydrolyzes PII-UMP to PII and UMP (deuridylylation). Thus, controls uridylylation state and activity of the PII proteins, and plays an important role in the regulation of nitrogen assimilation and metabolism. This Nitrosospira multiformis (strain ATCC 25196 / NCIMB 11849 / C 71) protein is Bifunctional uridylyltransferase/uridylyl-removing enzyme.